The sequence spans 200 residues: ATP-dependent Clp protease proteolytic subunit 2 (200 aa).

Serine 99 functions as the Nucleophile in the catalytic mechanism. The active site involves histidine 123.

Belongs to the peptidase S14 family. As to quaternary structure, fourteen ClpP subunits assemble into 2 heptameric rings which stack back to back to give a disk-like structure with a central cavity, resembling the structure of eukaryotic proteasomes.

The protein resides in the cytoplasm. The enzyme catalyses Hydrolysis of proteins to small peptides in the presence of ATP and magnesium. alpha-casein is the usual test substrate. In the absence of ATP, only oligopeptides shorter than five residues are hydrolyzed (such as succinyl-Leu-Tyr-|-NHMec, and Leu-Tyr-Leu-|-Tyr-Trp, in which cleavage of the -Tyr-|-Leu- and -Tyr-|-Trp bonds also occurs).. Cleaves peptides in various proteins in a process that requires ATP hydrolysis. Has a chymotrypsin-like activity. Plays a major role in the degradation of misfolded proteins. This chain is ATP-dependent Clp protease proteolytic subunit 2, found in Symbiobacterium thermophilum (strain DSM 24528 / JCM 14929 / IAM 14863 / T).